A 443-amino-acid polypeptide reads, in one-letter code: Phosphoglucosamine mutase (443 aa).

S100 (phosphoserine intermediate) is an active-site residue. The Mg(2+) site is built by S100, D239, D241, and D243. At S100 the chain carries Phosphoserine.

Belongs to the phosphohexose mutase family. Mg(2+) serves as cofactor. Post-translationally, activated by phosphorylation.

The catalysed reaction is alpha-D-glucosamine 1-phosphate = D-glucosamine 6-phosphate. In terms of biological role, catalyzes the conversion of glucosamine-6-phosphate to glucosamine-1-phosphate. In Shewanella sediminis (strain HAW-EB3), this protein is Phosphoglucosamine mutase.